A 300-amino-acid polypeptide reads, in one-letter code: Hemagglutinin 1 (300 aa).

Residues 200 to 221 (FIFATVVFIFLQAGRVPEIIAD) form a helical membrane-spanning segment.

The protein localises to the cell membrane. In terms of biological role, induces agglutination of neuraminidase-treated erythrocytes. The sequence is that of Hemagglutinin 1 (hag1) from Eikenella corrodens.